The chain runs to 205 residues: MSIMSYNGGAVMAMKGKNCVAIAADRRFGIQAQMVTTDFQKIFPMGDRLYIGLAGLATDVQTVAQRLKFRLNLYELKEGRQIKPYTLMSMVANLLYEKRFGPYYTEPVIAGLDPKTFKPFICSLDLIGCPMVTDDFVVSGTCSEQMYGMCESLWEPNMDPEHLFETISQAMLNAVDRDAVSGMGVIVHVIEKDKITTRTLKARMD.

Residue serine 2 is modified to N-acetylserine. Lysine 77 carries the post-translational modification N6-acetyllysine.

It belongs to the peptidase T1B family. In terms of assembly, the 26S proteasome consists of a 20S proteasome core and two 19S regulatory subunits. The 20S proteasome core is a barrel-shaped complex made of 28 subunits that are arranged in four stacked rings. The two outer rings are each formed by seven alpha subunits, and the two inner rings are formed by seven beta subunits. The proteolytic activity is exerted by three beta-subunits PSMB5, PSMB6 and PSMB7. Detected in liver (at protein level).

The protein resides in the cytoplasm. Its subcellular location is the nucleus. Its function is as follows. Non-catalytic component of the 20S core proteasome complex involved in the proteolytic degradation of most intracellular proteins. This complex plays numerous essential roles within the cell by associating with different regulatory particles. Associated with two 19S regulatory particles, forms the 26S proteasome and thus participates in the ATP-dependent degradation of ubiquitinated proteins. The 26S proteasome plays a key role in the maintenance of protein homeostasis by removing misfolded or damaged proteins that could impair cellular functions, and by removing proteins whose functions are no longer required. Associated with the PA200 or PA28, the 20S proteasome mediates ubiquitin-independent protein degradation. This type of proteolysis is required in several pathways including spermatogenesis (20S-PA200 complex) or generation of a subset of MHC class I-presented antigenic peptides (20S-PA28 complex). This Mus musculus (Mouse) protein is Proteasome subunit beta type-3 (Psmb3).